Consider the following 486-residue polypeptide: Glutamate--tRNA ligase 1 (486 aa).

The 'HIGH' region motif lies at 9-19; the sequence is PSPTGMLHIGG. A 'KMSKS' region motif is present at residues 259–263; that stretch reads KLSKR. Lys-262 contributes to the ATP binding site.

The protein belongs to the class-I aminoacyl-tRNA synthetase family. Glutamate--tRNA ligase type 1 subfamily. Monomer.

The protein resides in the cytoplasm. It carries out the reaction tRNA(Glu) + L-glutamate + ATP = L-glutamyl-tRNA(Glu) + AMP + diphosphate. Catalyzes the attachment of glutamate to tRNA(Glu) in a two-step reaction: glutamate is first activated by ATP to form Glu-AMP and then transferred to the acceptor end of tRNA(Glu). This chain is Glutamate--tRNA ligase 1, found in Hyphomonas neptunium (strain ATCC 15444).